A 108-amino-acid chain; its full sequence is uncharacterized protein (108 aa).

Glycine 2 is lipidated: N-myristoyl glycine; by host.

This is an uncharacterized protein from Acanthamoeba polyphaga (Amoeba).